The primary structure comprises 26 residues: Dermaseptin-J2 (26 aa).

At Val-26 the chain carries Valine amide.

As to expression, expressed by the skin glands.

Its subcellular location is the secreted. Has antimicrobial activity. The protein is Dermaseptin-J2 of Phasmahyla jandaia (Jandaia leaf frog).